Here is a 310-residue protein sequence, read N- to C-terminus: N-acetyl-gamma-glutamyl-phosphate reductase (310 aa).

Cys-117 is an active-site residue.

It belongs to the NAGSA dehydrogenase family. Type 2 subfamily.

It localises to the cytoplasm. The enzyme catalyses N-acetyl-L-glutamate 5-semialdehyde + phosphate + NADP(+) = N-acetyl-L-glutamyl 5-phosphate + NADPH + H(+). The protein operates within amino-acid biosynthesis; L-arginine biosynthesis; N(2)-acetyl-L-ornithine from L-glutamate: step 3/4. Catalyzes the NADPH-dependent reduction of N-acetyl-5-glutamyl phosphate to yield N-acetyl-L-glutamate 5-semialdehyde. This is N-acetyl-gamma-glutamyl-phosphate reductase from Rhizobium meliloti (strain 1021) (Ensifer meliloti).